The following is a 496-amino-acid chain: Aspartyl/glutamyl-tRNA(Asn/Gln) amidotransferase subunit B (496 aa).

This sequence belongs to the GatB/GatE family. GatB subfamily. In terms of assembly, heterotrimer of A, B and C subunits.

It carries out the reaction L-glutamyl-tRNA(Gln) + L-glutamine + ATP + H2O = L-glutaminyl-tRNA(Gln) + L-glutamate + ADP + phosphate + H(+). It catalyses the reaction L-aspartyl-tRNA(Asn) + L-glutamine + ATP + H2O = L-asparaginyl-tRNA(Asn) + L-glutamate + ADP + phosphate + 2 H(+). Allows the formation of correctly charged Asn-tRNA(Asn) or Gln-tRNA(Gln) through the transamidation of misacylated Asp-tRNA(Asn) or Glu-tRNA(Gln) in organisms which lack either or both of asparaginyl-tRNA or glutaminyl-tRNA synthetases. The reaction takes place in the presence of glutamine and ATP through an activated phospho-Asp-tRNA(Asn) or phospho-Glu-tRNA(Gln). The polypeptide is Aspartyl/glutamyl-tRNA(Asn/Gln) amidotransferase subunit B (Nitrosospira multiformis (strain ATCC 25196 / NCIMB 11849 / C 71)).